The following is a 415-amino-acid chain: Zona pellucida-like domain-containing protein 1 (415 aa).

Residues 1-19 (MEQIWLLLLLTIRVLPGSA) form the signal peptide. The Extracellular segment spans residues 20–372 (QFNGYNCDAN…PPFQLNAITS (353 aa)). The ZP domain occupies 43-320 (YCGVQAITMK…PICSHRERRD (278 aa)). Intrachain disulfides connect Cys-44/Cys-155 and Cys-79/Cys-104. N-linked (GlcNAc...) asparagine glycans are attached at residues Asn-121 and Asn-164. 2 disulfides stabilise this stretch: Cys-235–Cys-296 and Cys-255–Cys-313. The tract at residues 323 to 360 (RRTTWSPQSSSGSAVLSAGPIITRSDETPTNNSQLGSP) is disordered. Polar residues-rich tracts occupy residues 325–336 (TTWSPQSSSGSA) and 350–359 (TPTNNSQLGS). A helical transmembrane segment spans residues 373-393 (ALISGMVILGVTSFSLLLCSL). Topologically, residues 394 to 415 (ALLHRKGPTSLVLNGIRNPVFD) are cytoplasmic.

Post-translationally, proteolytically cleaved before the transmembrane segment to yield the secreted form found in the extracellular matrix of the cupula. Detected in placenta, kidney, lung, pancreas and at very low level in other tissues.

Its subcellular location is the cytoplasmic vesicle membrane. The protein resides in the secreted. It is found in the extracellular space. The protein localises to the extracellular matrix. Functionally, glycoprotein which is a component of the gelatinous extracellular matrix in the cupulae of the vestibular organ. The polypeptide is Zona pellucida-like domain-containing protein 1 (ZPLD1) (Homo sapiens (Human)).